A 231-amino-acid chain; its full sequence is Ubiquinone biosynthesis protein coq-4, mitochondrial (231 aa).

4 residues coordinate Zn(2+): H133, D134, H137, and E149.

The protein belongs to the COQ4 family. As to quaternary structure, component of a multi-subunit COQ enzyme complex. It depends on Zn(2+) as a cofactor.

Its subcellular location is the mitochondrion inner membrane. It carries out the reaction a 4-hydroxy-3-methoxy-5-(all-trans-polyprenyl)benzoate + H(+) = a 2-methoxy-6-(all-trans-polyprenyl)phenol + CO2. Its pathway is cofactor biosynthesis; ubiquinone biosynthesis. In terms of biological role, lyase that catalyzes the C1-decarboxylation of 4-hydroxy-3-methoxy-5-(all-trans-polyprenyl)benzoic acid into 2-methoxy-6-(all-trans-polyprenyl)phenol during ubiquinone biosynthesis. The chain is Ubiquinone biosynthesis protein coq-4, mitochondrial from Caenorhabditis elegans.